The primary structure comprises 271 residues: MSKRLLLFDFDETYFKHNTNEEDLSHLREMEKLLEKLTNNNEVMTAVLTGSTFQSVMDKMDQVNMTFKPLHIFSDLSSKMFTWNNGEYIESETYKKKVFSEPFLFEDIEDILRHISAQYNVEFIPQRAFEGNETHYNFYFHSTGNHSNDRRILEALVRYANDQNYTARFSRSNPLAGDPENAYDIDFTPSNAGKLYATQFLMKKYNIPVKSILGFGDSGNDEAYLSYLEHAYLMSNSRDEALKQKFRLTKYPYYQGITLHVKEFVEGKYDY.

It belongs to the HAD-like hydrolase superfamily.

This is an uncharacterized protein from Staphylococcus aureus.